We begin with the raw amino-acid sequence, 257 residues long: High affinity immunoglobulin epsilon receptor subunit alpha (257 aa).

The first 25 residues, 1 to 25 (MAPAMESPTLLCVALLFFAPDGVLA), serve as a signal peptide directing secretion. At 26–205 (VPQKPKVSLN…KAPREKYWLQ (180 aa)) the chain is on the extracellular side. Ig-like domains lie at 30 to 110 (PKVS…EVFS) and 111 to 193 (DWLL…LNIT). 7 N-linked (GlcNAc...) asparagine glycosylation sites follow: N46, N67, N75, N99, N160, N165, and N191. C51 and C93 are disulfide-bonded. A disulfide bridge connects residues C132 and C176. A helical transmembrane segment spans residues 206 to 224 (FFIPLLVVILFAVDTGLFI). At 225–257 (STQQQVTFLLKIKRTRKGFRLLNPHPKPNPKNN) the chain is on the cytoplasmic side.

Tetramer of an alpha chain, a beta chain, and two disulfide linked gamma chains. Interacts with IGHE (via CH3 region). As to expression, expressed in eosinophils.

The protein resides in the cell membrane. Functionally, high-affinity receptor for immunoglobulin epsilon/IgE. Mediates IgE effector functions in myeloid cells. Upon IgE binding and antigen/allergen cross-linking initiates signaling pathways that lead to myeloid cell activation and differentiation. On mast cells, basophils and eosinophils stimulates the secretion of vasoactive amines, lipid mediators and cytokines that contribute to inflammatory response, tissue remodeling and cytotoxicity against microbes. Triggers the immediate hypersensitivity response to allergens as a host defense mechanism against helminth parasites, pathogenic bacteria and venom toxicity. When dysregulated, it can elicit harmful life-threatening allergic and anaphylactic reactions. This chain is High affinity immunoglobulin epsilon receptor subunit alpha (FCER1A), found in Homo sapiens (Human).